Reading from the N-terminus, the 287-residue chain is 4-diphosphocytidyl-2-C-methyl-D-erythritol kinase (287 aa).

The active site involves Lys14. 96 to 106 (PWGAGLGGGSS) contacts ATP. Asp138 is an active-site residue.

This sequence belongs to the GHMP kinase family. IspE subfamily.

The enzyme catalyses 4-CDP-2-C-methyl-D-erythritol + ATP = 4-CDP-2-C-methyl-D-erythritol 2-phosphate + ADP + H(+). Its pathway is isoprenoid biosynthesis; isopentenyl diphosphate biosynthesis via DXP pathway; isopentenyl diphosphate from 1-deoxy-D-xylulose 5-phosphate: step 3/6. Its function is as follows. Catalyzes the phosphorylation of the position 2 hydroxy group of 4-diphosphocytidyl-2C-methyl-D-erythritol. The polypeptide is 4-diphosphocytidyl-2-C-methyl-D-erythritol kinase (Methylibium petroleiphilum (strain ATCC BAA-1232 / LMG 22953 / PM1)).